Consider the following 273-residue polypeptide: MLRVAGRRLSSSLSWRPAAAVARGPLAGAGVPDRDDDSARGRSQPRFSIDSPFFVASRGFSSTETVVPRNQDAGLADLPATVAAVKNPNPKVVYDEYNHERYPPGDPSKRAFAYFVLSGGRFIYASLLRLLVLKFVLSMSASKDVLALASLEVDLSSIEPGTTVTVKWRGKPVFIRRRTEDDIKLANSVDVASLRHPEQDAERVKNPEWLVVIGVCTHLGCIPLPNAGDFGGWFCPCHGSHYDISGRIRKGPAPFNLEVPTYSFLEENKLLVG.

The transit peptide at 1 to 61 directs the protein to the mitochondrion; that stretch reads MLRVAGRRLS…PFFVASRGFS (61 aa). Residues 25–46 are disordered; the sequence is PLAGAGVPDRDDDSARGRSQPR. Topologically, residues 62–110 are mitochondrial matrix; the sequence is STETVVPRNQDAGLADLPATVAAVKNPNPKVVYDEYNHERYPPGDPSKR. A helical transmembrane segment spans residues 111–133; it reads AFAYFVLSGGRFIYASLLRLLVL. The Mitochondrial intermembrane segment spans residues 134–273; it reads KFVLSMSASK…FLEENKLLVG (140 aa). A Rieske domain is found at 176–271; sequence RRRTEDDIKL…YSFLEENKLL (96 aa). The [2Fe-2S] cluster site is built by Cys216, His218, Cys235, and His238. An intrachain disulfide couples Cys221 to Cys237.

This sequence belongs to the Rieske iron-sulfur protein family. Component of the ubiquinol-cytochrome c oxidoreductase (cytochrome b-c1 complex, complex III, CIII), a multisubunit enzyme composed of 3 respiratory subunits cytochrome b, cytochrome c1 and Rieske protein, 2 core protein subunits, and several low-molecular weight protein subunits. The complex exists as an obligatory dimer and forms supercomplexes (SCs) in the inner mitochondrial membrane with cytochrome c oxidase (complex IV, CIV). The cofactor is [2Fe-2S] cluster.

It localises to the mitochondrion inner membrane. It carries out the reaction a quinol + 2 Fe(III)-[cytochrome c](out) = a quinone + 2 Fe(II)-[cytochrome c](out) + 2 H(+)(out). In terms of biological role, component of the ubiquinol-cytochrome c oxidoreductase, a multisubunit transmembrane complex that is part of the mitochondrial electron transport chain which drives oxidative phosphorylation. The respiratory chain contains 3 multisubunit complexes succinate dehydrogenase (complex II, CII), ubiquinol-cytochrome c oxidoreductase (cytochrome b-c1 complex, complex III, CIII) and cytochrome c oxidase (complex IV, CIV), that cooperate to transfer electrons derived from NADH and succinate to molecular oxygen, creating an electrochemical gradient over the inner membrane that drives transmembrane transport and the ATP synthase. The cytochrome b-c1 complex catalyzes electron transfer from ubiquinol to cytochrome c, linking this redox reaction to translocation of protons across the mitochondrial inner membrane, with protons being carried across the membrane as hydrogens on the quinol. In the process called Q cycle, 2 protons are consumed from the matrix, 4 protons are released into the intermembrane space and 2 electrons are passed to cytochrome c. The Rieske protein is a catalytic core subunit containing a [2Fe-2S] iron-sulfur cluster. It cycles between 2 conformational states during catalysis to transfer electrons from the quinol bound in the Q(0) site in cytochrome b to cytochrome c1. This Zea mays (Maize) protein is Cytochrome b-c1 complex subunit Rieske, mitochondrial.